Consider the following 1097-residue polypeptide: Protein STICHEL-like 3 (1097 aa).

Disordered regions lie at residues 1-22 (MTTT…NNRI), 74-168 (SLRD…YRIG), 220-293 (NVRP…GFGE), 321-358 (GRSL…DSSS), and 400-436 (DSDL…LTEK). Polar residues predominate over residues 10–20 (RVASSSSTRNN). The span at 95-113 (LPKKGDLVEGGRRSVDLKK) shows a compositional bias: basic and acidic residues. Polar residues predominate over residues 126-136 (PVVNFGTSKVT). A compositionally biased stretch (basic and acidic residues) spans 137-168 (PSDERSGPVSGERDSGRRVKREESSRKSYRIG). Over residues 227–241 (YGGGGGGGNTRGCAG) the composition is skewed to gly residues. The segment covering 245–259 (RPKRRKFRGTRRVRG) has biased composition (basic residues). Basic and acidic residues-rich tracts occupy residues 281-291 (VEKHDGEKEGF) and 332-345 (KGGR…RNGS). The span at 346–358 (DKMMIQSDDDSSS) shows a compositional bias: low complexity. A compositionally biased stretch (basic residues) spans 411-429 (EKKHKKKSHVNARHRHRQQ). 472–479 (GPNGTGKT) provides a ligand contact to ATP. Residues Cys-491, Cys-500, Cys-503, and Cys-506 each coordinate Zn(2+). A coiled-coil region spans residues 742 to 770 (KEDMEKLRQALKTLSEAEKQLRVSNDKLT). Disordered stretches follow at residues 790–828 (SSTA…DSRK), 913–932 (DPRN…DKSL), and 956–1003 (VTES…SQSI). Composition is skewed to basic and acidic residues over residues 796–807 (GGRESSDHHLDP) and 818–828 (GLDRRRGDSRK). Over residues 993-1003 (ASQSQNQSQSI) the composition is skewed to polar residues.

This sequence belongs to the DnaX/STICHEL family.

The polypeptide is Protein STICHEL-like 3 (Arabidopsis thaliana (Mouse-ear cress)).